The following is a 353-amino-acid chain: Photosystem II D2 protein (353 aa).

At T2 the chain carries N-acetylthreonine. T2 carries the phosphothreonine modification. Residues 41–61 traverse the membrane as a helical segment; sequence CAYFALGGWFTGTTFVTSWYT. H118 contacts chlorophyll a. Residues 125–141 form a helical membrane-spanning segment; the sequence is GFMLRQFELARSVQLRP. Positions 130 and 143 each coordinate pheophytin a. A helical membrane pass occupies residues 153-166; the sequence is VFVSVFLIYPLGQS. H198 lines the chlorophyll a pocket. A helical transmembrane segment spans residues 208–228; it reads AALLCAIHGATVENTLFEDGD. H215 and F262 together coordinate a plastoquinone. Position 215 (H215) interacts with Fe cation. Residue H269 coordinates Fe cation. A helical transmembrane segment spans residues 279–295; the sequence is GLWMSAIGVVGLALNLR.

This sequence belongs to the reaction center PufL/M/PsbA/D family. In terms of assembly, PSII is composed of 1 copy each of membrane proteins PsbA, PsbB, PsbC, PsbD, PsbE, PsbF, PsbH, PsbI, PsbJ, PsbK, PsbL, PsbM, PsbT, PsbX, PsbY, PsbZ, Psb30/Ycf12, at least 3 peripheral proteins of the oxygen-evolving complex and a large number of cofactors. It forms dimeric complexes. The D1/D2 heterodimer binds P680, chlorophylls that are the primary electron donor of PSII, and subsequent electron acceptors. It shares a non-heme iron and each subunit binds pheophytin, quinone, additional chlorophylls, carotenoids and lipids. There is also a Cl(-1) ion associated with D1 and D2, which is required for oxygen evolution. The PSII complex binds additional chlorophylls, carotenoids and specific lipids. serves as cofactor.

Its subcellular location is the plastid. The protein resides in the chloroplast thylakoid membrane. The enzyme catalyses 2 a plastoquinone + 4 hnu + 2 H2O = 2 a plastoquinol + O2. Photosystem II (PSII) is a light-driven water:plastoquinone oxidoreductase that uses light energy to abstract electrons from H(2)O, generating O(2) and a proton gradient subsequently used for ATP formation. It consists of a core antenna complex that captures photons, and an electron transfer chain that converts photonic excitation into a charge separation. The D1/D2 (PsbA/PsbD) reaction center heterodimer binds P680, the primary electron donor of PSII as well as several subsequent electron acceptors. D2 is needed for assembly of a stable PSII complex. The sequence is that of Photosystem II D2 protein from Cycas taitungensis (Prince sago).